Reading from the N-terminus, the 172-residue chain is Large ribosomal subunit protein uL10 (172 aa).

It belongs to the universal ribosomal protein uL10 family. As to quaternary structure, part of the ribosomal stalk of the 50S ribosomal subunit. The N-terminus interacts with L11 and the large rRNA to form the base of the stalk. The C-terminus forms an elongated spine to which L12 dimers bind in a sequential fashion forming a multimeric L10(L12)X complex.

Functionally, forms part of the ribosomal stalk, playing a central role in the interaction of the ribosome with GTP-bound translation factors. The polypeptide is Large ribosomal subunit protein uL10 (rplJ) (Caulobacter vibrioides (strain ATCC 19089 / CIP 103742 / CB 15) (Caulobacter crescentus)).